The sequence spans 249 residues: 3-deoxy-D-manno-octulosonic acid kinase (249 aa).

Residue Asp175 is part of the active site.

It belongs to the protein kinase superfamily. KdkA/RfaP family.

Its subcellular location is the cell inner membrane. It catalyses the reaction an alpha-Kdo-(2-&gt;6)-lipid IVA + ATP = a 4-O-phospho-alpha-Kdo-(2-&gt;6)-lipid IVA + ADP + H(+). The protein operates within bacterial outer membrane biogenesis; LPS core biosynthesis. Its function is as follows. Catalyzes the ATP-dependent phosphorylation of the 3-deoxy-D-manno-octulosonic acid (Kdo) residue in Kdo-lipid IV(A) at the 4-OH position. The chain is 3-deoxy-D-manno-octulosonic acid kinase from Xylella fastidiosa (strain M12).